The following is an 855-amino-acid chain: Sucrose synthase 7 (855 aa).

Residues 279 to 758 (SIFNIVIFSI…GLQRIYECYT (480 aa)) form a GT-B glycosyltransferase region.

This sequence belongs to the glycosyltransferase 1 family. Plant sucrose synthase subfamily. As to expression, predominantly expressed in roots, flowers and immature seeds.

The protein localises to the cytoplasm. It localises to the membrane. The catalysed reaction is an NDP-alpha-D-glucose + D-fructose = a ribonucleoside 5'-diphosphate + sucrose + H(+). Sucrose-cleaving enzyme that provides UDP-glucose and fructose for various metabolic pathways. This Oryza sativa subsp. japonica (Rice) protein is Sucrose synthase 7 (SUS7).